The primary structure comprises 90 residues: DNA-directed RNA polymerase subunit omega (90 aa).

The tract at residues 69–90 (RQEQQEQDAAELAAVSSITHNR) is disordered.

It belongs to the RNA polymerase subunit omega family. In terms of assembly, the RNAP catalytic core consists of 2 alpha, 1 beta, 1 beta' and 1 omega subunit. When a sigma factor is associated with the core the holoenzyme is formed, which can initiate transcription.

It carries out the reaction RNA(n) + a ribonucleoside 5'-triphosphate = RNA(n+1) + diphosphate. In terms of biological role, promotes RNA polymerase assembly. Latches the N- and C-terminal regions of the beta' subunit thereby facilitating its interaction with the beta and alpha subunits. This is DNA-directed RNA polymerase subunit omega from Aliivibrio fischeri (strain ATCC 700601 / ES114) (Vibrio fischeri).